Here is a 371-residue protein sequence, read N- to C-terminus: Putative HAD-like hydrolase Noc_2718 (371 aa).

Positions 1-288 are HAD-like hydrolase; that stretch reads MKQKILLCSD…TGREESAEEE (288 aa). Positions 291–371 constitute a YcgL domain; sequence QSCAIYRSCK…QLSSREYRRS (81 aa).

In the N-terminal section; belongs to the HAD-like hydrolase superfamily.

This Nitrosococcus oceani (strain ATCC 19707 / BCRC 17464 / JCM 30415 / NCIMB 11848 / C-107) protein is Putative HAD-like hydrolase Noc_2718.